The primary structure comprises 207 residues: 5-nitrosalicylic acid 1,2-dioxygenase (207 aa).

The region spanning 85-151 (QLIHPGEEVT…GDKDTLMYVI (67 aa)) is the Cupin type-2 domain.

The catalysed reaction is 5-nitrosalicylate + O2 = 2-oxo-3-(5-oxofuran-2-ylidene)propanoate + nitrite + H(+). Functionally, dioxygenase that catalyzes the cleavage of the aromatic ring of 5-nitrosalicylate (5NSA) without prior removal of the nitro group in biodegradation of 5-nitroanthranilate. In Bradyrhizobium sp, this protein is 5-nitrosalicylic acid 1,2-dioxygenase (naaB).